Here is a 517-residue protein sequence, read N- to C-terminus: Ribosome assembly protein 4 (517 aa).

A disordered region spans residues 1–25 (MATLAPPPSKRQRREEIQRTQTQQD). The segment at 34-128 (LGSFKANFID…TITLSAEPQA (95 aa)) is ubiquitin-like (UBL) domain. WD repeat units follow at residues 144 to 184 (GHGQ…PKFT), 187 to 226 (GHTG…QVNQ), 230 to 277 (GHAK…HVLS), 278 to 316 (GHKG…LVHN), 351 to 397 (EERR…SKPV), 402 to 441 (GHQN…FIKN), 444 to 483 (GHVA…LAMD), and 486 to 517 (GHED…TWRN).

The protein belongs to the NLE1/RSA4 family. As to quaternary structure, associates with the pre-60S ribosomal particle. Interacts (via WD repeats) with uL18. Interacts (via UBL domain) with MDN1 (via VWFA/MIDAS domain). Interacts (via WD repeats) with NSA2.

Its subcellular location is the nucleus. The protein localises to the nucleolus. Involved in ribosome biogenesis. Required for processing and efficient intra-nuclear transport of pre-60S ribosomal subunits. Interacts with the AAA-ATPase Midasin, which is essential for the ATP-dependent dissociation of a group of nonribosomal factors from the pre-60S particle. This Chaetomium thermophilum (strain DSM 1495 / CBS 144.50 / IMI 039719) (Thermochaetoides thermophila) protein is Ribosome assembly protein 4.